Reading from the N-terminus, the 435-residue chain is Thiosulfate sulfurtransferase YnjE (435 aa).

The first 23 residues, 1 to 23 (MKRVSQMTALAMALGLACASSWA), serve as a signal peptide directing secretion. 3 Rhodanese domains span residues 36–138 (QQQN…RLQK), 164–270 (PAGD…PVER), and 304–425 (HRQD…NPVA). Catalysis depends on Cys385, which acts as the Cysteine persulfide intermediate. Residue Arg390 participates in substrate binding.

In terms of assembly, monomer.

It is found in the periplasm. The enzyme catalyses thiosulfate + hydrogen cyanide = thiocyanate + sulfite + 2 H(+). This is Thiosulfate sulfurtransferase YnjE (ynjE) from Escherichia coli (strain K12).